Consider the following 389-residue polypeptide: Innexin-6 (389 aa).

4 helical membrane passes run 36-56, 111-131, 190-210, and 276-296; these read VVIL…GDPI, VFAL…AMIA, LFYT…FYIL, and LFIF…VNCF.

Belongs to the pannexin family.

Its subcellular location is the cell membrane. It localises to the cell junction. The protein localises to the gap junction. Its function is as follows. Structural component of the gap junctions. The polypeptide is Innexin-6 (inx-6) (Caenorhabditis elegans).